Consider the following 825-residue polypeptide: Thioredoxin domain-containing protein 16 (825 aa).

The signal sequence occupies residues 1–27 (MFSGFNVFRVGISFVIMCIFYMPTVNS). Positions 392–495 (LTVELTEETF…EDLLKFIQLN (104 aa)) constitute a Thioredoxin domain. A disulfide bond links Cys449 and Cys456. N-linked (GlcNAc...) asparagine glycosylation occurs at Asn460. The disordered stretch occupies residues 762-787 (RKVPKCMKETDVQENDKEQHEDKSAV). Positions 767–787 (CMKETDVQENDKEQHEDKSAV) are enriched in basic and acidic residues. The Mediates endoplasmic reticulum retention motif lies at 816-819 (DKEL).

As to quaternary structure, interacts with FOXRED2. Glycosylated.

It is found in the secreted. The protein resides in the endoplasmic reticulum lumen. This is Thioredoxin domain-containing protein 16 from Homo sapiens (Human).